Reading from the N-terminus, the 218-residue chain is Guanylate kinase (218 aa).

The Guanylate kinase-like domain occupies 5-188 (GNLFILSAPS…ALLDLTTIVN (184 aa)). Residue 12–19 (APSGAGKS) coordinates ATP.

It belongs to the guanylate kinase family.

Its subcellular location is the cytoplasm. It catalyses the reaction GMP + ATP = GDP + ADP. Its function is as follows. Essential for recycling GMP and indirectly, cGMP. The protein is Guanylate kinase of Colwellia psychrerythraea (strain 34H / ATCC BAA-681) (Vibrio psychroerythus).